The sequence spans 1429 residues: Autophagy-related protein 11 (1429 aa).

4 coiled-coil regions span residues 540 to 579 (GDDDLLQSLQEDKGKLENKLKTAESRVRRLEDLLHRQSQA), 616 to 808 (EGID…LDDH), 842 to 985 (TLVE…HMNS), and 1106 to 1135 (RRIKEVEHMARKWQKEARSYRERAHILQKD). Residues 574 to 622 (HRQSQASRPGNLFQPQGSQQRERVNSASSVRSSRFDDRRRSSEGIDPLM) form a disordered region. Over residues 575–592 (RQSQASRPGNLFQPQGSQ) the composition is skewed to polar residues. The span at 606-616 (SRFDDRRRSSE) shows a compositional bias: basic and acidic residues. Disordered regions lie at residues 1205–1224 (SKSLQPSSETESINDEENDN) and 1333–1405 (RAHN…PTRR). Composition is skewed to polar residues over residues 1206-1215 (KSLQPSSETE) and 1333-1362 (RAHNADTPSGTSPTQGGHLTSTNASLGQKN). Positions 1384–1398 (KADEQPRSVVQREDS) are enriched in basic and acidic residues.

Belongs to the ATG11 family. Homodimer and potential homooligomers. Interacts with ATG1 kinase and the ATG19 and ATG34 cargo protein transporters. Interacts with ATG9, ATG17 and ATG20.

Its subcellular location is the preautophagosomal structure membrane. It is found in the vacuole membrane. Its function is as follows. Involved in cytoplasm to vacuole transport (Cvt), pexophagy, mitophagy and nucleophagy. Recruits mitochondria for their selective degradation via autophagy (mitophagy) during starvation, through its interaction with ATG32. Works as scaffold proteins that recruit ATG proteins to the pre-autophagosome (PAS), the site of vesicle/autophagosome formation. Required for ATG9 anterograde transport from the mitochondria to the PAS. Also recruits the ATG19-prAPE1 complex to the PAS. Required for the Cvt vesicles completion. Autophagy is required for proper vegetative growth, asexual/sexual reproduction, and full virulence. Autophagy is particularly involved in the biosynthesis of deoxynivalenol (DON), an important virulence determinant. This is Autophagy-related protein 11 from Gibberella zeae (strain ATCC MYA-4620 / CBS 123657 / FGSC 9075 / NRRL 31084 / PH-1) (Wheat head blight fungus).